Consider the following 530-residue polypeptide: Glucocorticoid modulatory element-binding protein 2 (530 aa).

In terms of domain architecture, SAND spans 81–163; that stretch reads EEGENLEAEI…RKIMDSGELD (83 aa). Residue C110 participates in Zn(2+) binding. 4 residues coordinate DNA: K136, K140, K143, and R154. A Glycyl lysine isopeptide (Lys-Gly) (interchain with G-Cter in SUMO1); alternate cross-link involves residue K155. K155 is covalently cross-linked (Glycyl lysine isopeptide (Lys-Gly) (interchain with G-Cter in SUMO2); alternate). The Zn(2+) site is built by H167, C171, and C175. The stretch at 304-348 forms a coiled coil; that stretch reads QMDRSREQYARDLAALEQQCDEHRRRAKELKHKSQHLSNVLMTLT. S373 is subject to Phosphoserine.

In terms of assembly, homodimer, and heterodimer of GMEB1 and GMEB2. GMEB1 and GMEB2 form the parvovirus initiator complex (PIF). Interacts with the glucocorticoid receptor (NR3C1). May interact with CREB-binding protein (CBP). Expressed in peripheral blood lymphocytes and fetal liver. Expressed preferentially in reproductive and/or developmentally important cells, such as testis, placenta, bone marrow and fetal tissues.

The protein resides in the nucleus. It is found in the cytoplasm. Functionally, trans-acting factor that binds to glucocorticoid modulatory elements (GME) present in the TAT (tyrosine aminotransferase) promoter and increases sensitivity to low concentrations of glucocorticoids. Also binds to the transferrin receptor promoter. Essential auxiliary factor for the replication of parvoviruses. The chain is Glucocorticoid modulatory element-binding protein 2 (GMEB2) from Homo sapiens (Human).